We begin with the raw amino-acid sequence, 367 residues long: Heme A synthase (367 aa).

Transmembrane regions (helical) follow at residues 26–46 (IRGWLAVVLFALFALVLVGGA), 111–131 (LLARGIGVIFALPLFFFWVTG), 139–159 (LPLLAILALGGLQGFIGWWMV), 174–194 (LATHLTIACVIFAACMWIYRG), 212–232 (AAVIAIFSLFQIYLGAIVAGL), 272–292 (FVHRLGAYLLLALVLWHMIAA), 305–325 (SVLLFALVVVQAAIGITTLLL), and 327–347 (VPIGWGVLHQGGALVVLGFAI). H274 is a heme binding site. H335 contributes to the heme binding site.

It belongs to the COX15/CtaA family. Type 2 subfamily. Interacts with CtaB. Requires heme b as cofactor.

The protein localises to the cell membrane. The catalysed reaction is Fe(II)-heme o + 2 A + H2O = Fe(II)-heme a + 2 AH2. Its pathway is porphyrin-containing compound metabolism; heme A biosynthesis; heme A from heme O: step 1/1. In terms of biological role, catalyzes the conversion of heme O to heme A by two successive hydroxylations of the methyl group at C8. The first hydroxylation forms heme I, the second hydroxylation results in an unstable dihydroxymethyl group, which spontaneously dehydrates, resulting in the formyl group of heme A. This Sinorhizobium medicae (strain WSM419) (Ensifer medicae) protein is Heme A synthase.